Reading from the N-terminus, the 392-residue chain is Bifunctional enzyme Fae/Hps (392 aa).

Residues 1–161 (MFQIGEALMG…EESNKSTHAI (161 aa)) are formaldehyde-activating enzyme. H17 (proton donor) is an active-site residue. D19, L48, K66, T68, and Q83 together coordinate substrate. The tract at residues 162–392 (MGFKVTRLWD…IDQFRVMTDF (231 aa)) is 3-hexulose-6-phosphate synthase.

In the N-terminal section; belongs to the formaldehyde-activating enzyme family. It in the C-terminal section; belongs to the HPS/KGPDC family. HPS subfamily.

The enzyme catalyses 5,6,7,8-tetrahydromethanopterin + formaldehyde = 5,10-methylenetetrahydromethanopterin + H2O. It carries out the reaction D-ribulose 5-phosphate + formaldehyde = D-arabino-hex-3-ulose 6-phosphate. It participates in carbohydrate biosynthesis; D-ribose 5-phosphate biosynthesis. In terms of biological role, catalyzes the condensation of formaldehyde with tetrahydromethanopterin (H(4)MPT) to 5,10-methylenetetrahydromethanopterin. Its function is as follows. Catalyzes the reversible formation of ribulose-5-phosphate and formaldehyde from 3-hexulose-6-phosphate. This Methanosarcina barkeri (strain Fusaro / DSM 804) protein is Bifunctional enzyme Fae/Hps.